A 387-amino-acid chain; its full sequence is Apoptosis-inducing factor homolog B (387 aa).

Residues 12–16 (GGGYG), Arg-47, and Asp-292 each bind FAD.

Belongs to the FAD-dependent oxidoreductase family. Requires FAD as cofactor.

Putative FAD-dependent oxidoreductase. This chain is Apoptosis-inducing factor homolog B (aifB), found in Dictyostelium discoideum (Social amoeba).